A 467-amino-acid chain; its full sequence is Programmed cell death protein 4 (467 aa).

Disordered regions lie at residues 21–43 and 57–124; these read ALFSGDEENGGSEERKTEINGNW and KAKR…VWGT. The short motif at 57–63 is the Nuclear localization signal element; the sequence is KAKRRLR. The span at 112 to 123 shows a compositional bias: gly residues; the sequence is KKGGAGGKGVWG. 2 MI domains span residues 161 to 282 and 324 to 447; these read AFEK…GYKG and HLVK…LCPS. Positions 446-452 match the Nuclear localization signal motif; the sequence is PSRGRKR.

It belongs to the PDCD4 family. Interacts with EIF4A. As to expression, expressed in a broad spectrum of hematopoietic organs, such as thymus and bursa. Lower levels of expression detected in the kidney.

It localises to the nucleus. The protein localises to the cytoplasm. Inhibits translation initiation and cap-dependent translation. May excert its function by hindering the interaction between EIF4A and EIF4G. Inhibits the helicase activity of EIF4A. Binds RNA. Does not seem to be involved in apoptosis. This is Programmed cell death protein 4 (PDCD4) from Gallus gallus (Chicken).